Reading from the N-terminus, the 689-residue chain is Glycine--tRNA ligase beta subunit (689 aa).

The protein belongs to the class-II aminoacyl-tRNA synthetase family. In terms of assembly, tetramer of two alpha and two beta subunits.

It localises to the cytoplasm. The catalysed reaction is tRNA(Gly) + glycine + ATP = glycyl-tRNA(Gly) + AMP + diphosphate. This chain is Glycine--tRNA ligase beta subunit, found in Hamiltonella defensa subsp. Acyrthosiphon pisum (strain 5AT).